The chain runs to 445 residues: tRNA-2-methylthio-N(6)-dimethylallyladenosine synthase (445 aa).

In terms of domain architecture, MTTase N-terminal spans 3–124; the sequence is KKLYIKTYGC…LPELISKVVR (122 aa). Cysteine 12, cysteine 48, cysteine 87, cysteine 162, cysteine 166, and cysteine 169 together coordinate [4Fe-4S] cluster. The region spanning 148-380 is the Radical SAM core domain; it reads YPQGTSAFIS…QQELMAQQLA (233 aa). In terms of domain architecture, TRAM spans 383-445; sequence TSCVGSTMKV…SLNSLTGEIL (63 aa).

The protein belongs to the methylthiotransferase family. MiaB subfamily. In terms of assembly, monomer. The cofactor is [4Fe-4S] cluster.

The protein localises to the cytoplasm. It catalyses the reaction N(6)-dimethylallyladenosine(37) in tRNA + (sulfur carrier)-SH + AH2 + 2 S-adenosyl-L-methionine = 2-methylsulfanyl-N(6)-dimethylallyladenosine(37) in tRNA + (sulfur carrier)-H + 5'-deoxyadenosine + L-methionine + A + S-adenosyl-L-homocysteine + 2 H(+). In terms of biological role, catalyzes the methylthiolation of N6-(dimethylallyl)adenosine (i(6)A), leading to the formation of 2-methylthio-N6-(dimethylallyl)adenosine (ms(2)i(6)A) at position 37 in tRNAs that read codons beginning with uridine. This Rickettsia conorii (strain ATCC VR-613 / Malish 7) protein is tRNA-2-methylthio-N(6)-dimethylallyladenosine synthase.